Here is a 63-residue protein sequence, read N- to C-terminus: Conotoxin Lt11.1 (63 aa).

A signal peptide spans 1-23 (MMFRLTSVLLVIVLLNLVVLTNA). Cystine bridges form between Cys-24–Cys-34, Cys-28–Cys-39, Cys-33–Cys-42, and Cys-38–Cys-47. The propeptide occupies 53–63 (ALLQRLLGHQR).

This sequence belongs to the conotoxin I2 superfamily. Expressed by the venom duct.

It is found in the secreted. This is Conotoxin Lt11.1 from Conus litteratus (Lettered cone).